The chain runs to 265 residues: MDIFQALFLGLLQGLTEFLPISSSAHLILTPAFFGWEDQGVGFDLSVHVGTLLAVVLYFRRDVFGIARDGLISMGQRKIVGQGALAWYLVIGTIPAGLAGLALLDMIDNELRGASVIFFTTLVFGILLGIADWLPKRQRTMDSLNWKDAVIVGIAQAMALVPGTSRSGVTITAGLFLGMTRETASRFSFLLAIPIIVLASAVKLLEVATSDVIVDWNGFLIGGVTSFLMAITAIHFFLKWLNKVGMWPYVIYRIILAGVIYAVLM.

Transmembrane regions (helical) follow at residues 1–21 (MDIF…FLPI), 39–59 (QGVG…VLYF), 84–104 (ALAW…LALL), 114–134 (ASVI…ADWL), 144–164 (LNWK…VPGT), 187–207 (FSFL…LLEV), 218–238 (GFLI…HFFL), and 244–264 (VGMW…YAVL).

This sequence belongs to the UppP family.

It localises to the cell inner membrane. The catalysed reaction is di-trans,octa-cis-undecaprenyl diphosphate + H2O = di-trans,octa-cis-undecaprenyl phosphate + phosphate + H(+). Its function is as follows. Catalyzes the dephosphorylation of undecaprenyl diphosphate (UPP). Confers resistance to bacitracin. The chain is Undecaprenyl-diphosphatase from Marinobacter nauticus (strain ATCC 700491 / DSM 11845 / VT8) (Marinobacter aquaeolei).